The following is a 139-amino-acid chain: Translation initiation factor 5A (139 aa).

Lysine 36 is modified (hypusine).

Belongs to the eIF-5A family.

Its subcellular location is the cytoplasm. Its function is as follows. Functions by promoting the formation of the first peptide bond. The polypeptide is Translation initiation factor 5A (eif5a) (Aeropyrum pernix (strain ATCC 700893 / DSM 11879 / JCM 9820 / NBRC 100138 / K1)).